Here is a 68-residue protein sequence, read N- to C-terminus: Large ribosomal subunit protein bL31 (68 aa).

Cys16, Cys18, Cys37, and Cys40 together coordinate Zn(2+).

Belongs to the bacterial ribosomal protein bL31 family. Type A subfamily. As to quaternary structure, part of the 50S ribosomal subunit. Zn(2+) serves as cofactor.

Functionally, binds the 23S rRNA. The polypeptide is Large ribosomal subunit protein bL31 (Acidithiobacillus ferrooxidans (strain ATCC 23270 / DSM 14882 / CIP 104768 / NCIMB 8455) (Ferrobacillus ferrooxidans (strain ATCC 23270))).